The primary structure comprises 175 residues: Small ribosomal subunit protein uS9 (175 aa).

This sequence belongs to the universal ribosomal protein uS9 family.

The chain is Small ribosomal subunit protein uS9 from Streptomyces griseus subsp. griseus (strain JCM 4626 / CBS 651.72 / NBRC 13350 / KCC S-0626 / ISP 5235).